A 337-amino-acid polypeptide reads, in one-letter code: DNA-directed RNA polymerase subunit alpha (337 aa).

Residues methionine 1–glutamate 233 form an alpha N-terminal domain (alpha-NTD) region. Residues phenylalanine 249 to tyrosine 337 are alpha C-terminal domain (alpha-CTD).

Belongs to the RNA polymerase alpha chain family. Homodimer. The RNAP catalytic core consists of 2 alpha, 1 beta, 1 beta' and 1 omega subunit. When a sigma factor is associated with the core the holoenzyme is formed, which can initiate transcription.

The enzyme catalyses RNA(n) + a ribonucleoside 5'-triphosphate = RNA(n+1) + diphosphate. DNA-dependent RNA polymerase catalyzes the transcription of DNA into RNA using the four ribonucleoside triphosphates as substrates. In Brucella melitensis biotype 2 (strain ATCC 23457), this protein is DNA-directed RNA polymerase subunit alpha.